A 96-amino-acid polypeptide reads, in one-letter code: Growth-regulated alpha protein (96 aa).

The N-terminal stretch at 1–24 (MIPATRSLLCAALLLLATSRLATG) is a signal peptide. Intrachain disulfides connect Cys33–Cys59 and Cys35–Cys75.

This sequence belongs to the intercrine alpha (chemokine CxC) family. In terms of processing, the N-terminal processed form KC(5-72) is produced by proteolytic cleavage after secretion from bone marrow stromal cells.

The protein resides in the secreted. Its function is as follows. Has chemotactic activity for neutrophils. Contributes to neutrophil activation during inflammation. Hematoregulatory chemokine, which, in vitro, suppresses hematopoietic progenitor cell proliferation. KC(5-72) shows a highly enhanced hematopoietic activity. The protein is Growth-regulated alpha protein (Cxcl1) of Mus musculus (Mouse).